Here is a 784-residue protein sequence, read N- to C-terminus: Lon protease (784 aa).

Positions 6–207 (LPLMALRDMV…TVITTLTSNI (202 aa)) constitute a Lon N-terminal domain. Residue 356-363 (GPPGVGKT) coordinates ATP. One can recognise a Lon proteolytic domain in the interval 592–773 (EDQIGSTTGL…DQVLKHALVE (182 aa)). Catalysis depends on residues Ser679 and Lys722.

This sequence belongs to the peptidase S16 family. Homohexamer. Organized in a ring with a central cavity.

Its subcellular location is the cytoplasm. The catalysed reaction is Hydrolysis of proteins in presence of ATP.. Functionally, ATP-dependent serine protease that mediates the selective degradation of mutant and abnormal proteins as well as certain short-lived regulatory proteins. Required for cellular homeostasis and for survival from DNA damage and developmental changes induced by stress. Degrades polypeptides processively to yield small peptide fragments that are 5 to 10 amino acids long. Binds to DNA in a double-stranded, site-specific manner. In Rickettsia prowazekii (strain Madrid E), this protein is Lon protease.